We begin with the raw amino-acid sequence, 235 residues long: uncharacterized protein (235 aa).

This sequence belongs to the UreF family.

It is found in the cytoplasm. The protein localises to the nucleus. Probably facilitates nickel incorporation. This is an uncharacterized protein from Schizosaccharomyces pombe (strain 972 / ATCC 24843) (Fission yeast).